The following is a 165-amino-acid chain: Lipoprotein signal peptidase (165 aa).

3 consecutive transmembrane segments (helical) span residues 9-29 (LLTISFFVLIDWVTKLAVLLY), 69-89 (KYFLLLIRIVIILGILAFLFL), and 100-120 (FSLILLCSGAIGNVGDIFFYN). Residues aspartate 124 and aspartate 142 contribute to the active site. Residues 133–153 (WSFPTFNFADIFISLGTLIFV) traverse the membrane as a helical segment.

This sequence belongs to the peptidase A8 family.

It is found in the cell inner membrane. The enzyme catalyses Release of signal peptides from bacterial membrane prolipoproteins. Hydrolyzes -Xaa-Yaa-Zaa-|-(S,diacylglyceryl)Cys-, in which Xaa is hydrophobic (preferably Leu), and Yaa (Ala or Ser) and Zaa (Gly or Ala) have small, neutral side chains.. Its pathway is protein modification; lipoprotein biosynthesis (signal peptide cleavage). Functionally, this protein specifically catalyzes the removal of signal peptides from prolipoproteins. The protein is Lipoprotein signal peptidase of Chlamydia felis (strain Fe/C-56) (Chlamydophila felis).